The chain runs to 410 residues: MGVKAAQTGIWASQGQSIRVVGFQAQTAHRAICLLGFVVLVLLQCCSAYKLVCYYTSWSQYREGDGSCFPDAIDRFLCTHIIYSFANISNDHIDTWEWNDVTLYGMLNTLKNRNPNLKTLLSVGGWNFGSQRFSNIASNTQSRRTFIKSVPPFLRTHGFDGLDLAWLYPGQRDKQHFTTLIKEMRAEFIKEAQPGKKQLLLSAAVSAGKVTIDSSYDIAKISQHLDFISIMTYDFHGAWRGTTGHHSPLFRGQEDASPDRFSNTDYAVGYMLRLEAPASKLVMGIPTFGRSFTLASSETGVGAPISGPGIPGRFTKEAGTLAYYEICDFLRGATVHRILGQQVPYATKGNQWVGYDDQESVKSKVQYLKERQLAGAMVWALDLDDFQGSFCGQDLRFPLTNAIKDALAAT.

The signal sequence occupies residues Met-1–Ala-48. A GH18 domain is found at Tyr-49–Thr-410. An intrachain disulfide couples Cys-53 to Cys-78. Asn-87 is a glycosylation site (N-linked (GlcNAc...) asparagine). Chitin contacts are provided by residues Glu-97–Trp-98, Gly-124–Asn-127, Tyr-168, Met-231–Asp-234, and Arg-290. An intrachain disulfide couples Cys-327 to Cys-391. Residues Gln-351–Val-365 are important for AKT1 activation and IL8 production. Trp-379 contributes to the chitin binding site.

The protein belongs to the glycosyl hydrolase 18 family. In terms of assembly, monomer.

The protein localises to the secreted. The protein resides in the extracellular space. Its subcellular location is the cytoplasm. It localises to the perinuclear region. It is found in the endoplasmic reticulum. Its function is as follows. Carbohydrate-binding lectin with a preference for chitin. Has no chitinase activity. May play a role in tissue remodeling and in the capacity of cells to respond to and cope with changes in their environment. Plays a role in T-helper cell type 2 (Th2) inflammatory response and IL-13-induced inflammation, regulating allergen sensitization, inflammatory cell apoptosis, dendritic cell accumulation and M2 macrophage differentiation. Facilitates invasion of pathogenic enteric bacteria into colonic mucosa and lymphoid organs. Mediates activation of AKT1 signaling pathway and subsequent IL8 production in colonic epithelial cells. Regulates antibacterial responses in lung by contributing to macrophage bacterial killing, controlling bacterial dissemination and augmenting host tolerance. Also regulates hyperoxia-induced injury, inflammation and epithelial apoptosis in lung. The protein is Chitinase-3-like protein 1 (CHI3L1) of Pongo abelii (Sumatran orangutan).